The following is a 213-amino-acid chain: Ribonuclease Oy (213 aa).

His-35 is a catalytic residue. A disulfide bridge links Cys-51 with Cys-96. An N-linked (GlcNAc...) asparagine glycan is attached at Asn-52. Catalysis depends on residues Glu-89 and His-93. N-linked (GlcNAc...) asparagine glycosylation is found at Asn-121 and Asn-142. 2 disulfide bridges follow: Cys-160/Cys-198 and Cys-178/Cys-188.

This sequence belongs to the RNase T2 family.

It is found in the secreted. Functionally, releases mononucleotides from RNA in the order of 3'-GMP, 3'-AMP and 3'-UMP. The chain is Ribonuclease Oy from Magallana gigas (Pacific oyster).